The primary structure comprises 570 residues: Proline--tRNA ligase (570 aa).

This sequence belongs to the class-II aminoacyl-tRNA synthetase family. ProS type 1 subfamily. Homodimer.

Its subcellular location is the cytoplasm. It catalyses the reaction tRNA(Pro) + L-proline + ATP = L-prolyl-tRNA(Pro) + AMP + diphosphate. Functionally, catalyzes the attachment of proline to tRNA(Pro) in a two-step reaction: proline is first activated by ATP to form Pro-AMP and then transferred to the acceptor end of tRNA(Pro). As ProRS can inadvertently accommodate and process non-cognate amino acids such as alanine and cysteine, to avoid such errors it has two additional distinct editing activities against alanine. One activity is designated as 'pretransfer' editing and involves the tRNA(Pro)-independent hydrolysis of activated Ala-AMP. The other activity is designated 'posttransfer' editing and involves deacylation of mischarged Ala-tRNA(Pro). The misacylated Cys-tRNA(Pro) is not edited by ProRS. The chain is Proline--tRNA ligase from Geobacter metallireducens (strain ATCC 53774 / DSM 7210 / GS-15).